Consider the following 145-residue polypeptide: UPF0299 membrane protein plu1549 (145 aa).

Helical transmembrane passes span 6–26 (VLIV…CLLT), 34–54 (LPII…LLAF), 65–85 (GCSL…VGVM), and 95–115 (IIPI…IVAY).

This sequence belongs to the UPF0299 family.

Its subcellular location is the cell inner membrane. This chain is UPF0299 membrane protein plu1549, found in Photorhabdus laumondii subsp. laumondii (strain DSM 15139 / CIP 105565 / TT01) (Photorhabdus luminescens subsp. laumondii).